The sequence spans 1211 residues: MDPPAGAARRLLCPALLLLLLLLPPPLLPPPPPPANARLAAAADPPGGPLGHGAERILAVPVRTDAQGRLVSHVVSAATSRAGVRARRAAPVRTPSFPGGNEEEPGSHLFYNVTVFGRDLHLRLRPNARLVAPGATMEWQGEKGTTRVEPLLGSCLYVGDVAGLAEASSVALSNCDGLAGLIRMEEEEFFIEPLEKGLAAQEAEQGRVHVVYRRPPTSPPLGGPQALDTGASLDSLDSLSRALGVLEEHANSSRRRARRHAADDDYNIEVLLGVDDSVVQFHGKEHVQKYLLTLMNIVNEIYHDESLGAHINVVLVRIILLSYGKSMSLIEIGNPSQSLENVCRWAYLQQKPDTGHDEYHDHAIFLTRQDFGPSGMQGYAPVTGMCHPVRSCTLNHEDGFSSAFVVAHETGHVLGMEHDGQGNRCGDEVRLGSIMAPLVQAAFHRFHWSRCSQQELSRYLHSYDCLLDDPFAHDWPALPQLPGLHYSMNEQCRFDFGLGYMMCTAFRTFDPCKQLWCSHPDNPYFCKTKKGPPLDGTMCAPGKHCFKGHCIWLTPDILKRDGSWGAWSPFGSCSRTCGTGVKFRTRQCDNPHPANGGRTCSGLAYDFQLCSRQDCPDSLADFREEQCRQWDLYFEHGDAQHHWLPHEHRDAKERCHLYCESRETGEVVSMKRMVHDGTRCSYKDAFSLCVRGDCRKVGCDGVIGSSKQEDKCGVCGGDNSHCKVVKGTFTRSPKKHGYIKMFEIPAGARHLLIQEVDATSHHLAVKNLETGKFILNEENDVDASSKTFIAMGVEWEYRDEDGRETLQTMGPLHGTITVLVIPVGDTRVSLTYKYMIHEDSLNVDDNNVLEEDSVVYEWALKKWSPCSKPCGGGSQFTKYGCRRRLDHKMVHRGFCAALSKPKAIRRACNPQECSQPVWVTGEWEPCSQTCGRTGMQVRSVRCIQPLHDNTTRSVHAKHCNDARPESRRACSRELCPGRWRAGPWSQCSVTCGNGTQERPVLCRTADDSFGICQEERPETARTCRLGPCPRNISDPSKKSYVVQWLSRPDPDSPIRKISSKGHCQGDKSIFCRMEVLSRYCSIPGYNKLCCKSCNLYNNLTNVEGRIEPPPGKHNDIDVFMPTLPVPTVAMEVRPSPSTPLEVPLNASSTNATEDHPETNAVDEPYKIHGLEDEVQPPNLIPRRPSPYEKTRNQRIQELIDEMRKKEMLGKF.

Residues 1 to 29 form the signal peptide; the sequence is MDPPAGAARRLLCPALLLLLLLLPPPLLP. A propeptide spanning residues 30 to 253 is cleaved from the precursor; it reads PPPPPANARL…GVLEEHANSS (224 aa). N-linked (GlcNAc...) asparagine glycans are attached at residues Asn-112 and Asn-251. In terms of domain architecture, Peptidase M12B spans 266–470; the sequence is YNIEVLLGVD…HSYDCLLDDP (205 aa). Cystine bridges form between Cys-343-Cys-392, Cys-386-Cys-465, Cys-425-Cys-451, Cys-492-Cys-517, Cys-503-Cys-526, Cys-512-Cys-545, Cys-539-Cys-550, Cys-573-Cys-610, Cys-577-Cys-615, and Cys-588-Cys-600. His-408 lines the Zn(2+) pocket. Glu-409 is an active-site residue. Zn(2+)-binding residues include His-412 and His-418. A Disintegrin domain is found at 480–560; sequence QLPGLHYSMN…IWLTPDILKR (81 aa). The TSP type-1 1 domain maps to 561–616; sequence DGSWGAWSPFGSCSRTCGTGVKFRTRQCDNPHPANGGRTCSGLAYDFQLCSRQDCP. Positions 691–693 match the Cell attachment site motif; it reads RGD. A spacer region spans residues 723-851; it reads KVVKGTFTRS…NVDDNNVLEE (129 aa). TSP type-1 domains are found at residues 854 to 912, 914 to 971, and 975 to 1029; these read VVYE…NPQE, SQPV…RACS, and CPGR…GPCP. Asn-949 and Asn-993 each carry an N-linked (GlcNAc...) asparagine glycan. 3 disulfide bridges follow: Cys-987–Cys-1023, Cys-991–Cys-1028, and Cys-1002–Cys-1012. N-linked (GlcNAc...) asparagine glycosylation occurs at Asn-1031. The 39-residue stretch at 1059–1097 folds into the PLAC domain; sequence SKGHCQGDKSIFCRMEVLSRYCSIPGYNKLCCKSCNLYN. N-linked (GlcNAc...) asparagine glycosylation is found at Asn-1098, Asn-1145, and Asn-1150. Positions 1170 to 1191 are disordered; it reads LEDEVQPPNLIPRRPSPYEKTR.

May belong to a multimeric complex. Binds specifically to collagen type XIV. Zn(2+) is required as a cofactor. In terms of processing, the precursor is cleaved by a furin endopeptidase. Glycosylated. Can be O-fucosylated by POFUT2 on a serine or a threonine residue found within the consensus sequence C1-X(2)-(S/T)-C2-G of the TSP type-1 repeat domains where C1 and C2 are the first and second cysteine residue of the repeat, respectively. Fucosylated repeats can then be further glycosylated by the addition of a beta-1,3-glucose residue by the glucosyltransferase, B3GALTL. Fucosylation mediates the efficient secretion of ADAMTS family members. Can also be C-glycosylated with one or two mannose molecules on tryptophan residues within the consensus sequence W-X-X-W of the TPRs, and N-glycosylated. These other glycosylations can also facilitate secretion. As to expression, expressed at high level in skin, bone, tendon and aorta and at low levels in thymus and brain.

It is found in the secreted. The protein resides in the extracellular space. The protein localises to the extracellular matrix. The catalysed reaction is Cleaves the N-propeptide of collagen chain alpha1(I) at Pro-|-Gln and of alpha1(II) and alpha2(I) at Ala-|-Gln.. Cleaves the propeptides of type I and II collagen prior to fibril assembly. Does not act on type III collagen. Cleaves lysyl oxidase LOX at a site downstream of its propeptide cleavage site to produce a short LOX form with reduced collagen-binding activity. This chain is A disintegrin and metalloproteinase with thrombospondin motifs 2 (ADAMTS2), found in Homo sapiens (Human).